The following is a 178-amino-acid chain: Translation initiation factor IF-3 (178 aa).

This sequence belongs to the IF-3 family. Monomer.

It is found in the cytoplasm. Functionally, IF-3 binds to the 30S ribosomal subunit and shifts the equilibrium between 70S ribosomes and their 50S and 30S subunits in favor of the free subunits, thus enhancing the availability of 30S subunits on which protein synthesis initiation begins. The sequence is that of Translation initiation factor IF-3 from Legionella pneumophila (strain Paris).